The primary structure comprises 470 residues: 3-isopropylmalate dehydratase large subunit (470 aa).

Residues Cys-349, Cys-409, and Cys-412 each coordinate [4Fe-4S] cluster.

It belongs to the aconitase/IPM isomerase family. LeuC type 1 subfamily. In terms of assembly, heterodimer of LeuC and LeuD. Requires [4Fe-4S] cluster as cofactor.

It carries out the reaction (2R,3S)-3-isopropylmalate = (2S)-2-isopropylmalate. The protein operates within amino-acid biosynthesis; L-leucine biosynthesis; L-leucine from 3-methyl-2-oxobutanoate: step 2/4. Functionally, catalyzes the isomerization between 2-isopropylmalate and 3-isopropylmalate, via the formation of 2-isopropylmaleate. This chain is 3-isopropylmalate dehydratase large subunit, found in Campylobacter jejuni subsp. jejuni serotype O:2 (strain ATCC 700819 / NCTC 11168).